The chain runs to 231 residues: uncharacterized protein (231 aa).

Residue 10–34 (IITGASSGIGAATAKALEKQGVKVV) participates in NADP(+) binding. Substrate is bound at residue S140. The Proton acceptor role is filled by Y153.

The protein belongs to the short-chain dehydrogenases/reductases (SDR) family.

This is an uncharacterized protein from Staphylococcus haemolyticus (strain JCSC1435).